Reading from the N-terminus, the 387-residue chain is Succinate--CoA ligase [ADP-forming] subunit beta (387 aa).

In terms of domain architecture, ATP-grasp spans 9–245; the sequence is KDLLESYGLK…KSQENAKELK (237 aa). ATP-binding positions include lysine 46, 53 to 55, glutamate 100, tyrosine 103, and glutamate 108; that span reads GRG. Positions 200 and 214 each coordinate Mg(2+). Residues asparagine 265 and 322-324 contribute to the substrate site; that span reads GIV.

The protein belongs to the succinate/malate CoA ligase beta subunit family. As to quaternary structure, heterotetramer of two alpha and two beta subunits. The cofactor is Mg(2+).

The enzyme catalyses succinate + ATP + CoA = succinyl-CoA + ADP + phosphate. The catalysed reaction is GTP + succinate + CoA = succinyl-CoA + GDP + phosphate. It functions in the pathway carbohydrate metabolism; tricarboxylic acid cycle; succinate from succinyl-CoA (ligase route): step 1/1. In terms of biological role, succinyl-CoA synthetase functions in the citric acid cycle (TCA), coupling the hydrolysis of succinyl-CoA to the synthesis of either ATP or GTP and thus represents the only step of substrate-level phosphorylation in the TCA. The beta subunit provides nucleotide specificity of the enzyme and binds the substrate succinate, while the binding sites for coenzyme A and phosphate are found in the alpha subunit. The sequence is that of Succinate--CoA ligase [ADP-forming] subunit beta from Francisella tularensis subsp. tularensis (strain FSC 198).